The primary structure comprises 110 residues: UPF0060 membrane protein Psyr_3752 (110 aa).

The next 4 helical transmembrane spans lie at 5–25, 28–48, 59–79, and 84–104; these read LWFFLAALFEIFGCYAFWLWL, GKSALWVIPALVSLTVFALLL, AYAAYGGIYIVASIAWLGLVE, and LGTDWLGLAFCVIGATIILLG.

It belongs to the UPF0060 family.

Its subcellular location is the cell inner membrane. This Pseudomonas syringae pv. syringae (strain B728a) protein is UPF0060 membrane protein Psyr_3752.